Consider the following 371-residue polypeptide: MSKQSPTRKLRQTVYDASLKVMFTLRPERIHGIMNKALGVVDGVAPLNRTMEKIIAVHDDSLSQEVFGVTFPRPLGLAAGFDKNASMADAWGAVGFGYAELGTVTASPQPGNPTPRLFRLPADKAILNRMGFNNLGAAEVAKNLRNRKSTDVIGINIGKTKVVPAEHAVDDYRRSASLLGDLADYLVVNVSSPNTPGLRDLQAVESLRPILAAVQESTTVPVLVKIAPDLSDEDIDAVADLAVELKLAGIVATNTTISREGLNTPSGEVEAMGAGGISGAPVAARSLEVLKRLYARVGKEMVLISVGGISTPEQAWERITSGATLLQGYTPFIYGGPDWIRDIHLGIAKQLKAHGLRNIADAVGSELEWKN.

Residues 79-83 (AGFDK) and Thr-103 contribute to the FMN site. Lys-83 lines the substrate pocket. Position 128–132 (128–132 (NRMGF)) interacts with substrate. FMN is bound by residues Asn-156 and Asn-189. Asn-189 contributes to the substrate binding site. Ser-192 acts as the Nucleophile in catalysis. Asn-194 contacts substrate. Positions 225 and 253 each coordinate FMN. Residue 254-255 (NT) coordinates substrate. FMN contacts are provided by residues Gly-279, Gly-308, and 329 to 330 (YT).

Belongs to the dihydroorotate dehydrogenase family. Type 2 subfamily. Monomer. Requires FMN as cofactor.

The protein resides in the cell membrane. The enzyme catalyses (S)-dihydroorotate + a quinone = orotate + a quinol. The protein operates within pyrimidine metabolism; UMP biosynthesis via de novo pathway; orotate from (S)-dihydroorotate (quinone route): step 1/1. Its function is as follows. Catalyzes the conversion of dihydroorotate to orotate with quinone as electron acceptor. The polypeptide is Dihydroorotate dehydrogenase (quinone) (Corynebacterium glutamicum (strain ATCC 13032 / DSM 20300 / JCM 1318 / BCRC 11384 / CCUG 27702 / LMG 3730 / NBRC 12168 / NCIMB 10025 / NRRL B-2784 / 534)).